We begin with the raw amino-acid sequence, 62 residues long: Large ribosomal subunit protein bL28 (62 aa).

It belongs to the bacterial ribosomal protein bL28 family.

In Moorella thermoacetica (strain ATCC 39073 / JCM 9320), this protein is Large ribosomal subunit protein bL28.